Here is a 155-residue protein sequence, read N- to C-terminus: Cytochrome c-type biogenesis protein CcmE (155 aa).

Residues 1–7 (MTRKQKR) are Cytoplasmic-facing. Residues 8-28 (LVVIAGGMSFILAAVLLVMFA) traverse the membrane as a helical; Signal-anchor for type II membrane protein segment. Over 29 to 155 (FSQSVAYFYM…GKGQEAKATP (127 aa)) the chain is Periplasmic. His124 and Tyr128 together coordinate heme.

The protein belongs to the CcmE/CycJ family.

The protein localises to the cell inner membrane. Heme chaperone required for the biogenesis of c-type cytochromes. Transiently binds heme delivered by CcmC and transfers the heme to apo-cytochromes in a process facilitated by CcmF and CcmH. The chain is Cytochrome c-type biogenesis protein CcmE from Rhizobium etli (strain ATCC 51251 / DSM 11541 / JCM 21823 / NBRC 15573 / CFN 42).